An 879-amino-acid chain; its full sequence is Alanine--tRNA ligase 1 (879 aa).

His-566, His-570, Cys-668, and His-672 together coordinate Zn(2+).

The protein belongs to the class-II aminoacyl-tRNA synthetase family. Requires Zn(2+) as cofactor.

It is found in the cytoplasm. The catalysed reaction is tRNA(Ala) + L-alanine + ATP = L-alanyl-tRNA(Ala) + AMP + diphosphate. In terms of biological role, catalyzes the attachment of alanine to tRNA(Ala) in a two-step reaction: alanine is first activated by ATP to form Ala-AMP and then transferred to the acceptor end of tRNA(Ala). Also edits incorrectly charged Ser-tRNA(Ala) and Gly-tRNA(Ala) via its editing domain. The polypeptide is Alanine--tRNA ligase 1 (Lachnoclostridium phytofermentans (strain ATCC 700394 / DSM 18823 / ISDg) (Clostridium phytofermentans)).